The chain runs to 335 residues: HTH-type transcriptional regulator MalR (335 aa).

Residues 1 to 55 (MNIKDIARLSGVGVSTVSRVINNHPDVKQSTREKVLQIIKDSNYIPNNSARILKQ) form the HTH lacI-type domain. The segment at residues 3–22 (IKDIARLSGVGVSTVSRVIN) is a DNA-binding region (H-T-H motif).

Its function is as follows. Repressor of glucanotransferase gene expression. The protein is HTH-type transcriptional regulator MalR of Clostridium butyricum.